Here is a 130-residue protein sequence, read N- to C-terminus: Small ribosomal subunit protein uS9 (130 aa).

The protein belongs to the universal ribosomal protein uS9 family.

The protein is Small ribosomal subunit protein uS9 of Shewanella loihica (strain ATCC BAA-1088 / PV-4).